Consider the following 532-residue polypeptide: 56 kDa type-specific antigen (532 aa).

The first 22 residues, 1–22 (MKKIMLIASAMSALSLPFSASA), serve as a signal peptide directing secretion. The helical transmembrane segment at 67–87 (TNGLPFGGTLAAGMTIAPGFR) threads the bilayer. Residues 401–428 (QEEDAKNQGEGDCKQQQGTSEKSKKGKD) form a disordered region. A compositionally biased stretch (basic and acidic residues) spans 403-413 (EDAKNQGEGDC). Residues 480–500 (TGMVASGALGVAINAAEGVYV) form a helical membrane-spanning segment.

It is found in the cell membrane. Its function is as follows. May be an adherent factor for rickettsial adsorption to the host-cell surface and a determinant of virulence of individual rickettsial strain. It is the major outer membrane protein. This chain is 56 kDa type-specific antigen, found in Orientia tsutsugamushi (Rickettsia tsutsugamushi).